The primary structure comprises 907 residues: Protein translocase subunit SecA (907 aa).

ATP contacts are provided by residues Gln-87, 105-109, and Asp-506; that span reads GEGKT. Residues 834–850 show a composition bias toward basic and acidic residues; that stretch reads LEQQREEEAREQAEKMK. Positions 834–907 are disordered; the sequence is LEQQREEEAR…KYKQCHGKIE (74 aa). Low complexity predominate over residues 864-875; it reads QPQPSQQQGEQP. Zn(2+)-binding residues include Cys-891, Cys-893, Cys-902, and His-903. Basic residues predominate over residues 897-907; it reads KKYKQCHGKIE.

This sequence belongs to the SecA family. Monomer and homodimer. Part of the essential Sec protein translocation apparatus which comprises SecA, SecYEG and auxiliary proteins SecDF-YajC and YidC. The cofactor is Zn(2+).

The protein resides in the cell inner membrane. It is found in the cytoplasm. It carries out the reaction ATP + H2O + cellular proteinSide 1 = ADP + phosphate + cellular proteinSide 2.. Its function is as follows. Part of the Sec protein translocase complex. Interacts with the SecYEG preprotein conducting channel. Has a central role in coupling the hydrolysis of ATP to the transfer of proteins into and across the cell membrane, serving both as a receptor for the preprotein-SecB complex and as an ATP-driven molecular motor driving the stepwise translocation of polypeptide chains across the membrane. The polypeptide is Protein translocase subunit SecA (Alcanivorax borkumensis (strain ATCC 700651 / DSM 11573 / NCIMB 13689 / SK2)).